The chain runs to 32 residues: Delta-conotoxin EVIA (32 aa).

Intrachain disulfides connect cysteine 3/cysteine 21, cysteine 10/cysteine 25, and cysteine 20/cysteine 29. Proline 6 carries the 4-hydroxyproline modification. Leucine 32 is subject to Leucine amide.

The protein belongs to the conotoxin O1 superfamily. As to expression, expressed by the venom duct.

It localises to the secreted. Delta-conotoxins bind to site 6 of voltage-gated sodium channels and inhibit the inactivation process. This toxin inhibits sodium channel inactivation in neuronal membranes from amphibians and mammals (Nav1.2a/SCN1A, Nav1.3/SCN3A and Nav1.6/SCN8A) upon binding to receptor site 6. This chain is Delta-conotoxin EVIA, found in Conus ermineus (Agate cone).